We begin with the raw amino-acid sequence, 944 residues long: Bifunctional uridylyltransferase/uridylyl-removing enzyme (944 aa).

Positions 1–371 (MRDLDFTNIL…RFTHRNRKIA (371 aa)) are uridylyltransferase. Positions 372–727 (GSVEFVEDRG…VRTDSFHAIT (356 aa)) are uridylyl-removing. In terms of domain architecture, HD spans 488–604 (VDEHLIRTVD…TDFADRVQSL (117 aa)). 2 consecutive ACT domains span residues 728 to 809 (EITV…EVIA) and 839 to 918 (VIEV…LRER). Residues 911–944 (EEDELRERMPSGIIAPAATARTPPASEKKAGSPI) are disordered. The span at 925 to 935 (APAATARTPPA) shows a compositional bias: low complexity.

The protein belongs to the GlnD family. The cofactor is Mg(2+).

It catalyses the reaction [protein-PII]-L-tyrosine + UTP = [protein-PII]-uridylyl-L-tyrosine + diphosphate. It carries out the reaction [protein-PII]-uridylyl-L-tyrosine + H2O = [protein-PII]-L-tyrosine + UMP + H(+). Its activity is regulated as follows. Uridylyltransferase (UTase) activity is inhibited by glutamine, while glutamine likely activates uridylyl-removing (UR) activity. In terms of biological role, modifies, by uridylylation and deuridylylation, the PII regulatory proteins GlnB and GlnK, in response to the nitrogen status of the cell that GlnD senses through the glutamine level. Under low glutamine levels, catalyzes the conversion of the PII proteins and UTP to PII-UMP and PPi, while under higher glutamine levels, GlnD likely hydrolyzes PII-UMP to PII and UMP (deuridylylation). Thus, controls uridylylation state and activity of the PII proteins, and plays an important role in the regulation of nitrogen metabolism. The protein is Bifunctional uridylyltransferase/uridylyl-removing enzyme of Rhizobium leguminosarum bv. viciae.